We begin with the raw amino-acid sequence, 245 residues long: 2,3-bisphosphoglycerate-dependent phosphoglycerate mutase (245 aa).

Residues 8 to 15, 21 to 22, R60, 87 to 90, K98, 114 to 115, and 183 to 184 contribute to the substrate site; these read RHGQSLWN, TG, ERHY, RR, and GN. Catalysis depends on H9, which acts as the Tele-phosphohistidine intermediate. Residue E87 is the Proton donor/acceptor of the active site.

It belongs to the phosphoglycerate mutase family. BPG-dependent PGAM subfamily.

The enzyme catalyses (2R)-2-phosphoglycerate = (2R)-3-phosphoglycerate. It functions in the pathway carbohydrate degradation; glycolysis; pyruvate from D-glyceraldehyde 3-phosphate: step 3/5. Functionally, catalyzes the interconversion of 2-phosphoglycerate and 3-phosphoglycerate. The polypeptide is 2,3-bisphosphoglycerate-dependent phosphoglycerate mutase (Bacillus cereus (strain G9842)).